We begin with the raw amino-acid sequence, 613 residues long: ADP-ribosylation factor-binding protein GGA2 (613 aa).

In terms of domain architecture, VHS spans 33 to 163; sequence ATDPSMSEQD…MLKKQGIIKQ (131 aa). Positions 188–315 constitute a GAT domain; it reads DEEKSKLLTR…GVLLYKQVME (128 aa). A unstructured hinge region spans residues 316–483; sequence GRVTFGNRVT…VFVPLESVKP (168 aa). Disordered regions lie at residues 389-414 and 435-466; these read GQNC…NPSA and SQKS…SPSS. Polar residues predominate over residues 399–414; that stretch reads PSSSTLPGGGVQNPSA. A Phosphoserine modification is found at serine 400. In terms of domain architecture, GAE spans 484–605; it reads SSLPPLIVYD…SEVGEVKDFP (122 aa).

It belongs to the GGA protein family. Monomer. Interacts with NECAP1, TSG101, UBC and AFTPH/aftiphilin. Interacts with CNST. Interacts with GGA1 and GGA3. Binds to clathrin and activated ARFs, such as ARF1, ARF5 and ARF6. Binds RABEP1 and RABGEF1. Interacts with the type-I membrane proteins LRP3, M6PR/CD-MPR, IGF2R/CI-MPR and BACE1. Interacts (via N-terminal VHS domain) with SORL1/sorLA and SORT1 (via C-terminal cytosolic domain). Binds the accessory proteins CCDC91, P200, SYNRG, EPN4 and NECAP2. Interacts with ADRA2B. Interacts (via VHS domain) with PIK4B; the interaction is important for PIK4B location at the Golgi apparatus membrane. In terms of processing, ubiquitinated. In terms of tissue distribution, ubiquitously expressed.

It localises to the golgi apparatus. The protein localises to the trans-Golgi network membrane. It is found in the endosome membrane. The protein resides in the early endosome membrane. Plays a role in protein sorting and trafficking between the trans-Golgi network (TGN) and endosomes. Mediates the ARF-dependent recruitment of clathrin to the TGN and binds ubiquitinated proteins and membrane cargo molecules with a cytosolic acidic cluster-dileucine (DXXLL) motif. Mediates export of the GPCR receptor ADRA2B to the cell surface. Regulates retrograde transport of phosphorylated form of BACE1 from endosomes to the trans-Golgi network. The protein is ADP-ribosylation factor-binding protein GGA2 (GGA2) of Homo sapiens (Human).